Here is a 71-residue protein sequence, read N- to C-terminus: Small ribosomal subunit protein bS21 (71 aa).

This sequence belongs to the bacterial ribosomal protein bS21 family.

The protein is Small ribosomal subunit protein bS21 of Acinetobacter baylyi (strain ATCC 33305 / BD413 / ADP1).